The sequence spans 369 residues: Biotin synthase (369 aa).

The 219-residue stretch at 51–269 (NYVQVSTLLS…IAVARIMMPK (219 aa)) folds into the Radical SAM core domain. Cys-66, Cys-70, and Cys-73 together coordinate [4Fe-4S] cluster. 4 residues coordinate [2Fe-2S] cluster: Cys-110, Cys-141, Cys-201, and Arg-273.

It belongs to the radical SAM superfamily. Biotin synthase family. In terms of assembly, homodimer. It depends on [4Fe-4S] cluster as a cofactor. [2Fe-2S] cluster serves as cofactor.

The catalysed reaction is (4R,5S)-dethiobiotin + (sulfur carrier)-SH + 2 reduced [2Fe-2S]-[ferredoxin] + 2 S-adenosyl-L-methionine = (sulfur carrier)-H + biotin + 2 5'-deoxyadenosine + 2 L-methionine + 2 oxidized [2Fe-2S]-[ferredoxin]. It functions in the pathway cofactor biosynthesis; biotin biosynthesis; biotin from 7,8-diaminononanoate: step 2/2. Functionally, catalyzes the conversion of dethiobiotin (DTB) to biotin by the insertion of a sulfur atom into dethiobiotin via a radical-based mechanism. The chain is Biotin synthase from Pseudoalteromonas atlantica (strain T6c / ATCC BAA-1087).